Here is a 98-residue protein sequence, read N- to C-terminus: NADH-ubiquinone oxidoreductase chain 4L (98 aa).

3 helical membrane passes run 1–21, 29–49, and 59–79; these read MSLV…GLLM, SLLC…LTIL, and MPII…SLLV.

Belongs to the complex I subunit 4L family. In terms of assembly, core subunit of respiratory chain NADH dehydrogenase (Complex I) which is composed of 45 different subunits.

Its subcellular location is the mitochondrion inner membrane. It carries out the reaction a ubiquinone + NADH + 5 H(+)(in) = a ubiquinol + NAD(+) + 4 H(+)(out). In terms of biological role, core subunit of the mitochondrial membrane respiratory chain NADH dehydrogenase (Complex I) which catalyzes electron transfer from NADH through the respiratory chain, using ubiquinone as an electron acceptor. Part of the enzyme membrane arm which is embedded in the lipid bilayer and involved in proton translocation. This chain is NADH-ubiquinone oxidoreductase chain 4L (MT-ND4L), found in Cervus elaphus (Red deer).